The following is a 267-amino-acid chain: 2-keto-3-deoxy-L-rhamnonate aldolase (267 aa).

Residue His-49 is the Proton acceptor of the active site. Residue Gln-151 coordinates substrate. Glu-153 is a Mg(2+) binding site. Positions 178 and 179 each coordinate substrate. A Mg(2+)-binding site is contributed by Asp-179.

It belongs to the HpcH/HpaI aldolase family. KDR aldolase subfamily. In terms of assembly, homohexamer. It depends on Mg(2+) as a cofactor.

It catalyses the reaction 2-dehydro-3-deoxy-L-rhamnonate = (S)-lactaldehyde + pyruvate. Its function is as follows. Catalyzes the reversible retro-aldol cleavage of 2-keto-3-deoxy-L-rhamnonate (KDR) to pyruvate and lactaldehyde. This is 2-keto-3-deoxy-L-rhamnonate aldolase from Salmonella dublin (strain CT_02021853).